A 463-amino-acid polypeptide reads, in one-letter code: Phosphoglucosamine mutase (463 aa).

Serine 108 acts as the Phosphoserine intermediate in catalysis. The Mg(2+) site is built by serine 108, aspartate 247, aspartate 249, and aspartate 251. A Phosphoserine modification is found at serine 108.

Belongs to the phosphohexose mutase family. Mg(2+) serves as cofactor. Post-translationally, activated by phosphorylation.

The catalysed reaction is alpha-D-glucosamine 1-phosphate = D-glucosamine 6-phosphate. Its function is as follows. Catalyzes the conversion of glucosamine-6-phosphate to glucosamine-1-phosphate. This is Phosphoglucosamine mutase from Nitrosospira multiformis (strain ATCC 25196 / NCIMB 11849 / C 71).